The primary structure comprises 248 residues: UDP-N-acetyl-D-mannosaminuronic acid transferase (248 aa).

This sequence belongs to the glycosyltransferase 26 family.

It catalyses the reaction UDP-N-acetyl-alpha-D-mannosaminouronate + N-acetyl-alpha-D-glucosaminyl-di-trans,octa-cis-undecaprenyl diphosphate = beta-D-ManNAcA-(1-&gt;4)-alpha-D-GlcNAc-di-trans,octa-cis-undecaprenyl diphosphate + UDP + H(+). Its pathway is bacterial outer membrane biogenesis; enterobacterial common antigen biosynthesis. Functionally, catalyzes the synthesis of Und-PP-GlcNAc-ManNAcA (Lipid II), the second lipid-linked intermediate involved in enterobacterial common antigen (ECA) synthesis. The sequence is that of UDP-N-acetyl-D-mannosaminuronic acid transferase from Klebsiella pneumoniae subsp. pneumoniae (strain ATCC 700721 / MGH 78578).